The primary structure comprises 546 residues: MFS-type transporter patC (546 aa).

Polar residues predominate over residues 1 to 15 (MSIDASPSESVLESQ). The segment at 1–29 (MSIDASPSESVLESQTPDRVDESIPIKAE) is disordered. The segment covering 16-29 (TPDRVDESIPIKAE) has biased composition (basic and acidic residues). Helical transmembrane passes span 41–61 (IVGF…LLYG), 89–109 (VGFT…YAIF), 113–133 (WLFL…GAAP), 143–163 (VWAG…ITIL), 171–191 (VYVG…PIIG), 203–223 (WSFY…VFLL), 245–265 (WVGT…IVFG), 277–297 (IALY…QYFC), 318–338 (LLLY…VYYI), 350–370 (GIMS…TILL), 379–399 (GYFI…AVLM), 416–436 (ILMG…PAIV), 447–467 (FMNI…SAIF), and 515–535 (VIVS…ALYV).

Belongs to the major facilitator superfamily. TCR/Tet family.

The protein localises to the vacuole membrane. It localises to the cell membrane. In terms of biological role, MFS-type transporter; part of the gene cluster that mediates the biosynthesis of patulin, an acetate-derived tetraketide mycotoxin produced by several fungal species that shows antimicrobial properties against several bacteria. May be involved in the secretion of E-ascladiol to be converted to patulin by the secreted patulin synthase patE. In Penicillium expansum (Blue mold rot fungus), this protein is MFS-type transporter patC.